The following is a 61-amino-acid chain: Tryptophyllin-1 (61 aa).

Residues 1 to 22 form the signal peptide; it reads MDILKKSLFLALFLGLVSISFC. Positions 23-53 are excised as a propeptide; sequence DEEKRQDDDESNESEEKKEIHEEGSQEERRE. Positions 24 to 61 are disordered; sequence EEKRQDDDESNESEEKKEIHEEGSQEERREKPPPWVPV. Residues 36–55 are compositionally biased toward basic and acidic residues; that stretch reads SEEKKEIHEEGSQEERREKP.

In terms of tissue distribution, expressed by the skin glands.

Its subcellular location is the secreted. In terms of biological role, the synthetic peptide inhibits bradykinin-induced relaxation of rat tail artery smooth muscle, and also has anti-proliferative effects on the human prostate cancer cell lines LNCaP, PC3 and DU145. The sequence is that of Tryptophyllin-1 from Phyllomedusa sauvagei (Sauvage's leaf frog).